We begin with the raw amino-acid sequence, 22 residues long: NADH-ubiquinone oxidoreductase 16 kDa subunit (22 aa).

Complex I is composed of about 45 different subunits.

Its subcellular location is the mitochondrion inner membrane. The catalysed reaction is a ubiquinone + NADH + 5 H(+)(in) = a ubiquinol + NAD(+) + 4 H(+)(out). Its function is as follows. Transfer of electrons from NADH to the respiratory chain. The immediate electron acceptor for the enzyme is believed to be ubiquinone. This chain is NADH-ubiquinone oxidoreductase 16 kDa subunit, found in Solanum tuberosum (Potato).